The sequence spans 339 residues: Phenylalanine--tRNA ligase alpha subunit (339 aa).

A Mg(2+)-binding site is contributed by Glu254.

It belongs to the class-II aminoacyl-tRNA synthetase family. Phe-tRNA synthetase alpha subunit type 1 subfamily. As to quaternary structure, tetramer of two alpha and two beta subunits. The cofactor is Mg(2+).

The protein localises to the cytoplasm. The catalysed reaction is tRNA(Phe) + L-phenylalanine + ATP = L-phenylalanyl-tRNA(Phe) + AMP + diphosphate + H(+). This chain is Phenylalanine--tRNA ligase alpha subunit, found in Clostridium botulinum (strain 657 / Type Ba4).